We begin with the raw amino-acid sequence, 227 residues long: Small ribosomal subunit protein uS3m (227 aa).

It belongs to the universal ribosomal protein uS3 family. Component of the mitochondrial small ribosomal subunit (mt-SSU). Mature yeast 74S mitochondrial ribosomes consist of a small (37S) and a large (54S) subunit. The 37S small subunit contains a 15S ribosomal RNA (15S mt-rRNA) and at least 32 different proteins. The 54S large subunit contains a 21S rRNA (21S mt-rRNA) and at least 45 different proteins. uS3m, uS4m and uS5m form the narrow entry site of the mRNA channel.

The protein resides in the mitochondrion. Functionally, essential for mitochondrial protein synthesis and required for the maturation of small ribosomal subunits. Its function is as follows. Component of the mitochondrial ribosome (mitoribosome), a dedicated translation machinery responsible for the synthesis of mitochondrial genome-encoded proteins, including at least some of the essential transmembrane subunits of the mitochondrial respiratory chain. The mitoribosomes are attached to the mitochondrial inner membrane and translation products are cotranslationally integrated into the membrane. uS3m is essential for mitochondrial protein synthesis and required for the maturation of small ribosomal subunits. This chain is Small ribosomal subunit protein uS3m (var1), found in Schizosaccharomyces pombe (strain 972 / ATCC 24843) (Fission yeast).